Reading from the N-terminus, the 160-residue chain is ATP synthase subunit b 3 (160 aa).

The chain crosses the membrane as a helical span at residues 5 to 25; that stretch reads PTFWVLVAFVLFVAAVWRIAA.

It belongs to the ATPase B chain family. In terms of assembly, F-type ATPases have 2 components, F(1) - the catalytic core - and F(0) - the membrane proton channel. F(1) has five subunits: alpha(3), beta(3), gamma(1), delta(1), epsilon(1). F(0) has three main subunits: a(1), b(2) and c(10-14). The alpha and beta chains form an alternating ring which encloses part of the gamma chain. F(1) is attached to F(0) by a central stalk formed by the gamma and epsilon chains, while a peripheral stalk is formed by the delta and b chains.

The protein resides in the cell inner membrane. Functionally, f(1)F(0) ATP synthase produces ATP from ADP in the presence of a proton or sodium gradient. F-type ATPases consist of two structural domains, F(1) containing the extramembraneous catalytic core and F(0) containing the membrane proton channel, linked together by a central stalk and a peripheral stalk. During catalysis, ATP synthesis in the catalytic domain of F(1) is coupled via a rotary mechanism of the central stalk subunits to proton translocation. Component of the F(0) channel, it forms part of the peripheral stalk, linking F(1) to F(0). This chain is ATP synthase subunit b 3, found in Rhodospirillum centenum (strain ATCC 51521 / SW).